The sequence spans 125 residues: Holo-[acyl-carrier-protein] synthase (125 aa).

Mg(2+) is bound by residues D8 and E57.

The protein belongs to the P-Pant transferase superfamily. AcpS family. Mg(2+) is required as a cofactor.

It is found in the cytoplasm. The catalysed reaction is apo-[ACP] + CoA = holo-[ACP] + adenosine 3',5'-bisphosphate + H(+). In terms of biological role, transfers the 4'-phosphopantetheine moiety from coenzyme A to a Ser of acyl-carrier-protein. This chain is Holo-[acyl-carrier-protein] synthase, found in Blochmanniella floridana.